Reading from the N-terminus, the 396-residue chain is Bifunctional enzyme Fae/Hps (396 aa).

Positions 1–161 are formaldehyde-activating enzyme; that stretch reads MYQIGEALIG…YEKDRGVHAI (161 aa). Histidine 17 functions as the Proton donor in the catalytic mechanism. Substrate-binding residues include aspartate 19, leucine 48, lysine 66, threonine 68, and glutamine 83. The tract at residues 162–396 is 3-hexulose-6-phosphate synthase; that stretch reads MGYKITRLWD…IDQYRIMTDF (235 aa).

The protein in the N-terminal section; belongs to the formaldehyde-activating enzyme family. This sequence in the C-terminal section; belongs to the HPS/KGPDC family. HPS subfamily.

The enzyme catalyses 5,6,7,8-tetrahydromethanopterin + formaldehyde = 5,10-methylenetetrahydromethanopterin + H2O. It carries out the reaction D-ribulose 5-phosphate + formaldehyde = D-arabino-hex-3-ulose 6-phosphate. Its pathway is carbohydrate biosynthesis; D-ribose 5-phosphate biosynthesis. Catalyzes the condensation of formaldehyde with tetrahydromethanopterin (H(4)MPT) to 5,10-methylenetetrahydromethanopterin. Its function is as follows. Catalyzes the reversible formation of ribulose-5-phosphate and formaldehyde from 3-hexulose-6-phosphate. The polypeptide is Bifunctional enzyme Fae/Hps (Methanocella arvoryzae (strain DSM 22066 / NBRC 105507 / MRE50)).